Consider the following 353-residue polypeptide: S-adenosylmethionine:tRNA ribosyltransferase-isomerase (353 aa).

This sequence belongs to the QueA family. In terms of assembly, monomer.

It localises to the cytoplasm. The catalysed reaction is 7-aminomethyl-7-carbaguanosine(34) in tRNA + S-adenosyl-L-methionine = epoxyqueuosine(34) in tRNA + adenine + L-methionine + 2 H(+). It participates in tRNA modification; tRNA-queuosine biosynthesis. In terms of biological role, transfers and isomerizes the ribose moiety from AdoMet to the 7-aminomethyl group of 7-deazaguanine (preQ1-tRNA) to give epoxyqueuosine (oQ-tRNA). The sequence is that of S-adenosylmethionine:tRNA ribosyltransferase-isomerase from Rickettsia bellii (strain RML369-C).